Reading from the N-terminus, the 203-residue chain is Small ribosomal subunit protein uS10m (203 aa).

The transit peptide at 1–14 (MLRNTIALRSFIRT) directs the protein to the mitochondrion. The residue at position 193 (serine 193) is a Phosphoserine.

Belongs to the universal ribosomal protein uS10 family. Component of the mitochondrial small ribosomal subunit (mt-SSU). Mature yeast 74S mitochondrial ribosomes consist of a small (37S) and a large (54S) subunit. The 37S small subunit contains a 15S ribosomal RNA (15S mt-rRNA) and 34 different proteins. The 54S large subunit contains a 21S rRNA (21S mt-rRNA) and 46 different proteins.

Its subcellular location is the mitochondrion. Functionally, component of the mitochondrial ribosome (mitoribosome), a dedicated translation machinery responsible for the synthesis of mitochondrial genome-encoded proteins, including at least some of the essential transmembrane subunits of the mitochondrial respiratory chain. The mitoribosomes are attached to the mitochondrial inner membrane and translation products are cotranslationally integrated into the membrane. This Saccharomyces cerevisiae (strain ATCC 204508 / S288c) (Baker's yeast) protein is Small ribosomal subunit protein uS10m (RSM10).